Consider the following 601-residue polypeptide: Putative helicase 7 (601 aa).

Residues 17–182 enclose the Helicase ATP-binding domain; that stretch reads QSFLMSDKNL…IIDAEIIKTD (166 aa). 30–37 contributes to the ATP binding site; the sequence is APTGTGKS. The DEAH box signature appears at 129–132; it reads DEIH. Positions 208–375 constitute a Helicase C-terminal domain; the sequence is LKEDFIKKMV…VLEDFLLALI (168 aa).

The sequence is that of Putative helicase 7 (SIFV0007) from Saccharolobus islandicus (Sulfolobus islandicus).